A 148-amino-acid chain; its full sequence is Nucleoside diphosphate kinase 1 (148 aa).

Residues lysine 9, phenylalanine 57, arginine 85, threonine 91, arginine 102, and asparagine 112 each coordinate ATP. The active-site Pros-phosphohistidine intermediate is histidine 115.

This sequence belongs to the NDK family. Requires Mg(2+) as cofactor.

It catalyses the reaction a 2'-deoxyribonucleoside 5'-diphosphate + ATP = a 2'-deoxyribonucleoside 5'-triphosphate + ADP. The enzyme catalyses a ribonucleoside 5'-diphosphate + ATP = a ribonucleoside 5'-triphosphate + ADP. Major role in the synthesis of nucleoside triphosphates other than ATP. The ATP gamma phosphate is transferred to the NDP beta phosphate via a ping-pong mechanism, using a phosphorylated active-site intermediate. The protein is Nucleoside diphosphate kinase 1 of Nicotiana tabacum (Common tobacco).